The sequence spans 778 residues: Jhy protein homolog (778 aa).

Disordered regions lie at residues 62–271 (DRIR…PKTD), 334–408 (QYES…LDTS), 631–654 (EKGK…QKRD), and 721–746 (IPKP…AGKE). Basic and acidic residues predominate over residues 118–139 (PIEDKYSDLRYDPNWKSKKEEG). Low complexity predominate over residues 223-234 (SSLSPYVKSSSS). The segment covering 334 to 344 (QYESTKSSNVP) has biased composition (polar residues). Over residues 358–371 (SRRPAKLKIRKQCK) the composition is skewed to basic residues. Over residues 375-389 (GLKSSTTEEVTASQG) the composition is skewed to polar residues. The span at 390–402 (NQNNPPRQQQNQN) shows a compositional bias: low complexity. Residues 633–650 (GKKHKKRSSSKNTKLKGY) are compositionally biased toward basic residues. The segment covering 733–746 (ASKEQKNPTYAGKE) has biased composition (basic and acidic residues).

Its function is as follows. Required for the normal development of cilia in brain ependymal cells lining the ventricular surfaces. The polypeptide is Jhy protein homolog (Homo sapiens (Human)).